A 205-amino-acid polypeptide reads, in one-letter code: Mediator of RNA polymerase II transcription subunit 29 (205 aa).

Positions 1–27 (MNPNMNMMQMSGPPMMQVSPMMQSSPQ) are enriched in low complexity. The tract at residues 1–65 (MNPNMNMMQM…QQQQQQAEKL (65 aa)) is disordered. Residues 28 to 38 (PMMPTGPPGPV) show a composition bias toward pro residues. The span at 39–61 (PMQQQHQQQQQQQQQQQQQQQQQ) shows a compositional bias: low complexity.

Belongs to the Mediator complex subunit 29 family. In terms of assembly, component of the Mediator complex.

It localises to the nucleus. Functionally, component of the Mediator complex, a coactivator involved in the regulated transcription of nearly all RNA polymerase II-dependent genes. Mediator functions as a bridge to convey information from gene-specific regulatory proteins to the basal RNA polymerase II transcription machinery. Mediator is recruited to promoters by direct interactions with regulatory proteins and serves as a scaffold for the assembly of a functional preinitiation complex with RNA polymerase II and the general transcription factors. The polypeptide is Mediator of RNA polymerase II transcription subunit 29 (ix) (Drosophila virilis (Fruit fly)).